The sequence spans 246 residues: Ribonuclease PH (246 aa).

Residues Arg-91 and 129-131 (GTR) contribute to the phosphate site.

Belongs to the RNase PH family. In terms of assembly, homohexameric ring arranged as a trimer of dimers.

The enzyme catalyses tRNA(n+1) + phosphate = tRNA(n) + a ribonucleoside 5'-diphosphate. Its function is as follows. Phosphorolytic 3'-5' exoribonuclease that plays an important role in tRNA 3'-end maturation. Removes nucleotide residues following the 3'-CCA terminus of tRNAs; can also add nucleotides to the ends of RNA molecules by using nucleoside diphosphates as substrates, but this may not be physiologically important. Probably plays a role in initiation of 16S rRNA degradation (leading to ribosome degradation) during starvation. This is Ribonuclease PH from Burkholderia vietnamiensis (strain G4 / LMG 22486) (Burkholderia cepacia (strain R1808)).